A 530-amino-acid polypeptide reads, in one-letter code: Pentatricopeptide repeat-containing protein At5g56310 (530 aa).

PPR repeat units lie at residues 77–114 (NTYLHNTMIRALSLLDEPNAHSIAITVYRKLWALCAKP), 115–149 (DTFTFPFVLKIAVRVSDVWFGRQIHGQVVVFGFDS), 150–180 (SVHVVTGLIQMYFSCGGLGDARKMFDEMLVK), 181–211 (DVNVWNALLAGYGKVGEMDEARSLLEMMPCW), 214–248 (NEVSWTCVISGYAKSGRASEAIEVFQRMLMENVEP), 249–283 (DEVTLLAVLSACADLGSLELGERICSYVDHRGMNR), 284–314 (AVSLNNAVIDMYAKSGNITKALDVFECVNER), 315–349 (NVVTWTTIIAGLATHGHGAEALAMFNRMVKAGVRP), 350–380 (NDVTFIAILSACSHVGWVDLGKRLFNSMRSK), and 386–420 (NIEHYGCMIDLLGRAGKLREADEVIKSMPFKANAA). A type E motif region spans residues 421–496 (IWGSLLAASN…MAGESSIEVE (76 aa)). Residues 497–527 (NRVYKFISGDLTHPQVERIHEILQEMDLQIQ) form a type E(+) motif region.

This sequence belongs to the PPR family. PCMP-E subfamily.

The chain is Pentatricopeptide repeat-containing protein At5g56310 (PCMP-E13) from Arabidopsis thaliana (Mouse-ear cress).